Here is a 293-residue protein sequence, read N- to C-terminus: Ribosomal protein L11 methyltransferase (293 aa).

The S-adenosyl-L-methionine site is built by threonine 145, glycine 166, aspartate 188, and asparagine 230.

This sequence belongs to the methyltransferase superfamily. PrmA family.

It localises to the cytoplasm. The enzyme catalyses L-lysyl-[protein] + 3 S-adenosyl-L-methionine = N(6),N(6),N(6)-trimethyl-L-lysyl-[protein] + 3 S-adenosyl-L-homocysteine + 3 H(+). Its function is as follows. Methylates ribosomal protein L11. This Serratia proteamaculans (strain 568) protein is Ribosomal protein L11 methyltransferase.